The following is a 104-amino-acid chain: ATP-dependent Clp protease adapter protein ClpS (104 aa).

Belongs to the ClpS family. Binds to the N-terminal domain of the chaperone ClpA.

Functionally, involved in the modulation of the specificity of the ClpAP-mediated ATP-dependent protein degradation. The protein is ATP-dependent Clp protease adapter protein ClpS of Burkholderia mallei (strain NCTC 10247).